The primary structure comprises 187 residues: Phosphatidylethanolamine-binding protein 1 (187 aa).

Phosphoserine occurs at positions 6 and 13. The residue at position 42 (Thr42) is a Phosphothreonine. A phosphoserine mark is found at Ser52, Ser54, Ser98, and Ser153. Residues 93–134 are interaction with RAF1; sequence KGNDISSGTVLSDYVGSGPPKGTGLHRYVWLVYEQARPLKCD.

Belongs to the phosphatidylethanolamine-binding protein family. In terms of assembly, has a tendency to form dimers by disulfide cross-linking. Interacts with RAF1 and this interaction is enhanced if RAF1 is phosphorylated on residues 'Ser-338', 'Ser-339', 'Tyr-340' and 'Tyr-341'. Interacts with ALOX15; in response to IL13/interleukin-13, prevents the interaction of PEBP1 with RAF1 to activate the ERK signaling cascade.

Its subcellular location is the cytoplasm. In terms of biological role, binds ATP, opioids and phosphatidylethanolamine. Has lower affinity for phosphatidylinositol and phosphatidylcholine. Serine protease inhibitor which inhibits thrombin, neuropsin and chymotrypsin but not trypsin, tissue type plasminogen activator and elastase. Inhibits the kinase activity of RAF1 by inhibiting its activation and by dissociating the RAF1/MEK complex and acting as a competitive inhibitor of MEK phosphorylation. Functionally, HCNP may be involved in the function of the presynaptic cholinergic neurons of the central nervous system. HCNP increases the production of choline acetyltransferase but not acetylcholinesterase. Seems to be mediated by a specific receptor. This is Phosphatidylethanolamine-binding protein 1 (PEBP1) from Macaca fascicularis (Crab-eating macaque).